A 367-amino-acid chain; its full sequence is Germination protease (367 aa).

Residues 1 to 15 (MKEPLDLSKYSVRTD) constitute a propeptide that is removed on maturation.

Belongs to the peptidase A25 family. In terms of assembly, homotetramer. Post-translationally, autoproteolytically processed. The inactive tetrameric zymogen termed p46 autoprocesses to a smaller form termed p41, which is active only during spore germination.

The enzyme catalyses Endopeptidase action with P4 Glu or Asp, P1 preferably Glu &gt; Asp, P1' hydrophobic and P2' Ala.. Its function is as follows. Initiates the rapid degradation of small, acid-soluble proteins during spore germination. This is Germination protease from Bacillus thuringiensis subsp. konkukian (strain 97-27).